A 382-amino-acid chain; its full sequence is MSKSPVILHLRAETKPLEARAALTPSTTKQLLDAGFEIYVEESSQSTFDIKEYEAVGAKIVPEGSWKTAPKERIIFGLKELPENETFPLIHEHIQFAHCYKDQAGWQDVLKRFPQGNGILYDLEFLENDQGRRVAAFGFYAGFAGAAIGVLDWSFKQLNGNTKGTKGEGEGGELPGVTPYPNENELIKDVKIELEKALTKNGGQYPKCLVIGALGRCGSGAIDLFKKIGIPDDNIAKWDMAETAKGGPFQEIVDSDIFINCIYLSKPIPPFINKEILNNENRKLTTIVDVSADTTNPHNPIPVYEIATVFNEPTVEVKLDKGPKLSVCSIDHLPSLLPREASEFFAKDLMPSLLELPNRDTSPVWVRAKQLFDKHVARLDKE.

Residues R20 and K79 each coordinate L-saccharopine. The active-site Proton acceptor is K79. The active-site Proton donor is the H98. Q103 lines the L-saccharopine pocket. NAD(+) is bound at residue R132. L-saccharopine is bound by residues R133 and F137. NAD(+) is bound by residues 215 to 216, D239, T243, Y263, and V290; that span reads GR. C217 and C261 are disulfide-bonded. 291–293 provides a ligand contact to L-saccharopine; that stretch reads SAD. NAD(+) is bound at residue 330-333; it reads IDHL.

It belongs to the AlaDH/PNT family. As to quaternary structure, monomer.

The catalysed reaction is L-saccharopine + NAD(+) + H2O = L-lysine + 2-oxoglutarate + NADH + H(+). Its pathway is amino-acid biosynthesis; L-lysine biosynthesis via AAA pathway; L-lysine from L-alpha-aminoadipate (fungal route): step 3/3. Its function is as follows. Catalyzes the NAD(+)-dependent cleavage of saccharopine to L-lysine and 2-oxoglutarate, the final step in the alpha-aminoadipate (AAA) pathway for lysin biosynthesis. The polypeptide is Saccharopine dehydrogenase [NAD(+), L-lysine-forming] (Candida albicans (strain SC5314 / ATCC MYA-2876) (Yeast)).